Consider the following 378-residue polypeptide: Protein KlaB (378 aa).

It belongs to the TelA family.

Functionally, belongs to the kla operon, which is associated with cryptic tellurite resistance, and IncW plasmid fertility inhibition. The sequence is that of Protein KlaB (klaB) from Escherichia coli.